A 21-amino-acid polypeptide reads, in one-letter code: Major outer membrane protein P44 (21 aa).

Monomer.

It is found in the cell outer membrane. The polypeptide is Major outer membrane protein P44 (Mannheimia haemolytica (Pasteurella haemolytica)).